We begin with the raw amino-acid sequence, 676 residues long: Lutropin-choriogonadotropic hormone receptor (676 aa).

The first 29 residues, 1–29 (MKQPLLALQLLKLLLLLLLPLPPLPRALR), serve as a signal peptide directing secretion. Residues 30–340 (EARCCPEPCN…EDIMGYDFLR (311 aa)) lie on the Extracellular side of the membrane. N103 carries an N-linked (GlcNAc...) asparagine glycan. LRR repeat units follow at residues 126–151 (LPRL…IFSS), 153–175 (TNFI…AFQG), 176–200 (MNNE…AFNG), 201–224 (TTVI…AFRG), and 225–248 (ATGP…GLES). 2 N-linked (GlcNAc...) asparagine glycosylation sites follow: N178 and N199. The residue at position 308 (Y308) is a Sulfotyrosine. The helical transmembrane segment at 341 to 362 (VLIWLINILAIMGNMTVLFVLL) threads the bilayer. At 363–372 (TSRYKLTVPR) the chain is on the cytoplasmic side. The helical transmembrane segment at 373–393 (FLMCNLSFADFCMGLYLLLIA) threads the bilayer. The Extracellular segment spans residues 394–416 (SVDSQTKGQYYNHAIDWQTGSGC). C416 and C491 are oxidised to a cystine. Residues 417–439 (NTAGFFTVFASELSVYTLTVITL) form a helical membrane-spanning segment. The Cytoplasmic segment spans residues 440 to 459 (ERWHTITYAIHLDQKLRLRH). Residues 460–482 (AILIMLGGWLFSSLIAMLPLVGV) form a helical membrane-spanning segment. Residues 483–502 (SNYMKVSICFPMDVETTLSQ) lie on the Extracellular side of the membrane. A helical membrane pass occupies residues 503 to 526 (IYILTILILNVVAFIIICACYIKI). Residues 527–547 (YFAVRNPELMATNKDTKIAKK) are Cytoplasmic-facing. The chain crosses the membrane as a helical span at residues 548 to 571 (MAILIFTDFTCMAPISFFAISAAF). Over 572–582 (KMPLITVTNSK) the chain is Extracellular. A helical membrane pass occupies residues 583-604 (VLLVLFYPINSCANPFLYAIFT). Residues 605–676 (KTFRRDFFLL…LLDKTCYKEY (72 aa)) lie on the Cytoplasmic side of the membrane. 2 S-palmitoyl cysteine lipidation sites follow: C620 and C621.

This sequence belongs to the G-protein coupled receptor 1 family. FSH/LSH/TSH subfamily. Sulfated.

Its subcellular location is the cell membrane. Receptor for lutropin-choriogonadotropic hormone. The activity of this receptor is mediated by G proteins which activate adenylate cyclase. The protein is Lutropin-choriogonadotropic hormone receptor (LHCGR) of Callithrix jacchus (White-tufted-ear marmoset).